The sequence spans 37 residues: Large ribosomal subunit protein bL36c (37 aa).

Belongs to the bacterial ribosomal protein bL36 family.

The protein resides in the plastid. It is found in the chloroplast. This Psilotum nudum (Whisk fern) protein is Large ribosomal subunit protein bL36c.